Consider the following 311-residue polypeptide: Aspartate carbamoyltransferase catalytic subunit (311 aa).

Carbamoyl phosphate-binding residues include R55 and T56. K85 is a binding site for L-aspartate. Carbamoyl phosphate contacts are provided by R106, H135, and Q138. Positions 168 and 230 each coordinate L-aspartate. Residues L268 and P269 each contribute to the carbamoyl phosphate site.

This sequence belongs to the aspartate/ornithine carbamoyltransferase superfamily. ATCase family. Heterododecamer (2C3:3R2) of six catalytic PyrB chains organized as two trimers (C3), and six regulatory PyrI chains organized as three dimers (R2).

It catalyses the reaction carbamoyl phosphate + L-aspartate = N-carbamoyl-L-aspartate + phosphate + H(+). It functions in the pathway pyrimidine metabolism; UMP biosynthesis via de novo pathway; (S)-dihydroorotate from bicarbonate: step 2/3. Its function is as follows. Catalyzes the condensation of carbamoyl phosphate and aspartate to form carbamoyl aspartate and inorganic phosphate, the committed step in the de novo pyrimidine nucleotide biosynthesis pathway. This Yersinia enterocolitica serotype O:8 / biotype 1B (strain NCTC 13174 / 8081) protein is Aspartate carbamoyltransferase catalytic subunit.